The sequence spans 699 residues: Large T antigen (699 aa).

Methionine 1 carries the post-translational modification N-acetylmethionine; by host. Positions 12-75 (ELMDLLGLER…VKVAHQPDFG (64 aa)) constitute a J domain. Positions 105–109 (LFCHE) match the LXCXE motif motif. Phosphoserine; by host occurs at positions 114, 122, and 125. Residues 115–137 (DEEGTADSQHSTPPKKKRKVEDP) form a disordered region. Phosphothreonine; by host is present on threonine 126. The short motif at 127–134 (PPKKKRKV) is the Nuclear localization signal element. A DNA-binding region (T-ag OBD) is located at residues 141 to 256 (PPDLHAFLSQ…EESIQGGLKE (116 aa)). Residues 267–359 (TKQVSWKLIT…KRVDTLHMTR (93 aa)) form a T-ag D1-type zinc finger. Residues cysteine 304, cysteine 307, histidine 315, and histidine 319 each contribute to the Zn(2+) site. The 161-residue stretch at 402-562 (KMDTLIYDFL…IYLRKALNNS (161 aa)) folds into the SF3 helicase domain. 428-435 (GPIDSGKT) is an ATP binding site. The tract at residues 637–678 (ETEDSGHGSSTESQSQCFSQASDTSGSADAPASQTPDPYDHD) is disordered. The segment covering 643 to 672 (HGSSTESQSQCFSQASDTSGSADAPASQTP) has biased composition (polar residues). Serine 661 is subject to Phosphoserine; by host. Lysine 691 is modified (N6-acetyllysine; by host). Phosphothreonine; by host is present on threonine 695.

Forms homohexamers in the presence of ATP. Interacts with host HDAC1. Interacts (via LXCXE domain) with host RB1; the interaction induces the aberrant dissociation of RB1-E2F1 complex thereby disrupting RB1's activity. Interacts (via LXCXE domain) with host pRB-related proteins RBL1 and RBL2. Interacts (via C-terminus) with host TOP1 and POLA1 allowing DNA replication. Interacts with host TP53, inhibiting TP53 binding to DNA. Interacts with host preinitiation complex components TBP, TFIIA and TFIID to regulate transcription initiation. Mg(2+) is required as a cofactor. In terms of processing, phosphorylated on both serine and threonine residues. Small t antigen inhibits the dephosphorylation by the AC form of PP2A. O-Glycosylated near the C-terminal region. Post-translationally, acetylated by CBP in a TP53-dependent manner.

It localises to the host nucleus. It carries out the reaction Couples ATP hydrolysis with the unwinding of duplex DNA by translocating in the 3'-5' direction.. It catalyses the reaction ATP + H2O = ADP + phosphate + H(+). In terms of biological role, isoform large T antigen is a key early protein essential for both driving viral replication and inducing cellular transformation. Plays a role in viral genome replication by driving entry of quiescent cells into the cell cycle and by autoregulating the synthesis of viral early mRNA. Displays highly oncogenic activities by corrupting the host cellular checkpoint mechanisms that guard cell division and the transcription, replication, and repair of DNA. Participates in the modulation of cellular gene expression preceeding viral DNA replication. This step involves binding to host key cell cycle regulators retinoblastoma protein RB1/pRb and TP53. Induces the disassembly of host E2F1 transcription factors from RB1, thus promoting transcriptional activation of E2F1-regulated S-phase genes. Inhibits host TP53 binding to DNA, abrogating the ability of TP53 to stimulate gene expression. Plays the role of a TFIID-associated factor (TAF) in transcription initiation for all three RNA polymerases, by stabilizing the TBP-TFIIA complex on promoters. Initiates viral DNA replication and unwinding via interactions with the viral origin of replication. Binds two adjacent sites in the SV40 origin. The replication fork movement is facilitated by Large T antigen helicase activity. Has processive 3'-5' DNA helicase activity which requires a short 3' single-stranded region and ATP. Activates the transcription of viral late mRNA, through host TBP and TFIIA stabilization. Interferes with histone deacetylation mediated by HDAC1, leading to activation of transcription. The sequence is that of Large T antigen from Papio hamadryas ursinus (Chacma baboon).